The sequence spans 182 residues: UPF0148 protein VNG_2366C (182 aa).

Residues 1–162 are disordered; the sequence is MSNTDDGFDK…RASDADDPRT (162 aa). 2 stretches are compositionally biased toward basic and acidic residues: residues 7–33 and 47–62; these read GFDK…ETAR and DHCD…HDGE. A compositionally biased stretch (low complexity) spans 105 to 122; the sequence is PDTSSSTAAATDDVPTAA. The span at 153–162 shows a compositional bias: basic and acidic residues; it reads RASDADDPRT.

Belongs to the UPF0148 family.

The protein is UPF0148 protein VNG_2366C of Halobacterium salinarum (strain ATCC 700922 / JCM 11081 / NRC-1) (Halobacterium halobium).